The following is a 206-amino-acid chain: Ribosomal RNA small subunit methyltransferase G (206 aa).

S-adenosyl-L-methionine contacts are provided by residues Gly-73, Leu-78, 124-125 (VE), and Arg-139.

It belongs to the methyltransferase superfamily. RNA methyltransferase RsmG family.

Its subcellular location is the cytoplasm. It catalyses the reaction guanosine(527) in 16S rRNA + S-adenosyl-L-methionine = N(7)-methylguanosine(527) in 16S rRNA + S-adenosyl-L-homocysteine. Specifically methylates the N7 position of guanine in position 527 of 16S rRNA. The polypeptide is Ribosomal RNA small subunit methyltransferase G (Photorhabdus laumondii subsp. laumondii (strain DSM 15139 / CIP 105565 / TT01) (Photorhabdus luminescens subsp. laumondii)).